A 641-amino-acid chain; its full sequence is Phosphomethylpyrimidine synthase (641 aa).

Substrate is bound by residues Asn-221, Met-250, Tyr-279, His-315, 335 to 337 (SRG), 376 to 379 (DGLR), and Glu-415. Position 419 (His-419) interacts with Zn(2+). Tyr-442 is a substrate binding site. His-483 lines the Zn(2+) pocket. [4Fe-4S] cluster contacts are provided by Cys-563, Cys-566, and Cys-571.

This sequence belongs to the ThiC family. As to quaternary structure, homodimer. Requires [4Fe-4S] cluster as cofactor.

The enzyme catalyses 5-amino-1-(5-phospho-beta-D-ribosyl)imidazole + S-adenosyl-L-methionine = 4-amino-2-methyl-5-(phosphooxymethyl)pyrimidine + CO + 5'-deoxyadenosine + formate + L-methionine + 3 H(+). The protein operates within cofactor biosynthesis; thiamine diphosphate biosynthesis. Catalyzes the synthesis of the hydroxymethylpyrimidine phosphate (HMP-P) moiety of thiamine from aminoimidazole ribotide (AIR) in a radical S-adenosyl-L-methionine (SAM)-dependent reaction. The polypeptide is Phosphomethylpyrimidine synthase (Rhodopseudomonas palustris (strain TIE-1)).